Reading from the N-terminus, the 317-residue chain is Melanocyte-stimulating hormone receptor (317 aa).

Over 1–37 the chain is Extracellular; it reads MPLQGPQRRLLGSLNSTLPATPYLGLTTNQTEPPCLE. A glycan (N-linked (GlcNAc...) asparagine) is linked at Asn-29. The chain crosses the membrane as a helical span at residues 38–63; sequence VSIPDGLFLSLGLVSLVENVLVVTAI. Over 64–72 the chain is Cytoplasmic; that stretch reads AKNRNLHSP. A helical transmembrane segment spans residues 73-93; sequence MYYFICCLAVSDLLVSMSNVL. The Extracellular segment spans residues 94 to 118; that stretch reads EMAILLLLEAGVLATQASVLQQLDN. Residues 119–140 form a helical membrane-spanning segment; it reads IIDVLICGSMVSSLCFLGSIAV. The Cytoplasmic segment spans residues 141–163; sequence DRYISIFYALRYHSIMMLPRVWR. The chain crosses the membrane as a helical span at residues 164-183; that stretch reads AIVAIWVVSVLSSTLFIAYY. Over 184 to 191 the chain is Extracellular; that stretch reads NHTAVLLC. The chain crosses the membrane as a helical span at residues 192-211; sequence LVTFFVAMLVLMAVLYVHML. The Cytoplasmic segment spans residues 212 to 240; sequence ARACQHARGIARLHKRQHPIHQGFGLKGA. A helical membrane pass occupies residues 241 to 266; it reads ATLTILLGVFFLCWGPFFLHLSLLIL. Over 267–279 the chain is Extracellular; sequence CPQHPTCGCVFKN. The helical transmembrane segment at 280-300 threads the bilayer; sequence FKLFLTLILCSAIVDPLIYAF. The Cytoplasmic segment spans residues 301–317; sequence RSQELRKTLQEVLLCSW. Cys-315 carries S-palmitoyl cysteine lipidation.

This sequence belongs to the G-protein coupled receptor 1 family. As to quaternary structure, interacts with MGRN1, but does not undergo MGRN1-mediated ubiquitination; this interaction competes with GNAS-binding and thus inhibits agonist-induced cAMP production. Interacts with OPN3; the interaction results in a decrease in MC1R-mediated cAMP signaling and ultimately a decrease in melanin production in melanocytes.

The protein localises to the cell membrane. Its function is as follows. Receptor for MSH (alpha, beta and gamma) and ACTH. The activity of this receptor is mediated by G proteins which activate adenylate cyclase. Mediates melanogenesis, the production of eumelanin (black/brown) and phaeomelanin (red/yellow), via regulation of cAMP signaling in melanocytes. The chain is Melanocyte-stimulating hormone receptor (MC1R) from Equus caballus (Horse).